Here is a 336-residue protein sequence, read N- to C-terminus: F420-dependent glucose-6-phosphate dehydrogenase (336 aa).

Asp-39 is a binding site for coenzyme F420-(gamma-Glu)n. His-40 acts as the Proton donor in catalysis. Residues Thr-76 and 107-108 (TG) each bind coenzyme F420-(gamma-Glu)n. Glu-109 functions as the Proton acceptor in the catalytic mechanism. Residues Asn-112, 177–178 (GG), and 180–181 (VV) each bind coenzyme F420-(gamma-Glu)n. Residues Thr-195, Lys-198, Lys-259, and Arg-283 each coordinate substrate.

This sequence belongs to the F420-dependent glucose-6-phosphate dehydrogenase family. In terms of assembly, homodimer.

It catalyses the reaction oxidized coenzyme F420-(gamma-L-Glu)(n) + D-glucose 6-phosphate + H(+) = 6-phospho-D-glucono-1,5-lactone + reduced coenzyme F420-(gamma-L-Glu)(n). In terms of biological role, catalyzes the coenzyme F420-dependent oxidation of glucose 6-phosphate (G6P) to 6-phosphogluconolactone. Appears to have a role in resistance to oxidative stress, via its consumption of G6P that serves as a source of reducing power to combat oxidative stress in mycobacteria. Cannot use NAD, NADP, FAD or FMN instead of coenzyme F420 as an electron acceptor. Exhibits nearly no activity with D-mannose-6-phosphate or D-fructose-6-phosphate as substrate. The polypeptide is F420-dependent glucose-6-phosphate dehydrogenase (fgd) (Mycolicibacterium smegmatis (strain ATCC 700084 / mc(2)155) (Mycobacterium smegmatis)).